The chain runs to 322 residues: 4-hydroxythreonine-4-phosphate dehydrogenase (322 aa).

A substrate-binding site is contributed by Thr132. A divalent metal cation contacts are provided by His160, His205, and His260. Substrate-binding residues include Lys268, Asn277, and Arg286.

It belongs to the PdxA family. Homodimer. Zn(2+) is required as a cofactor. Mg(2+) serves as cofactor. The cofactor is Co(2+).

It localises to the cytoplasm. It carries out the reaction 4-(phosphooxy)-L-threonine + NAD(+) = 3-amino-2-oxopropyl phosphate + CO2 + NADH. It participates in cofactor biosynthesis; pyridoxine 5'-phosphate biosynthesis; pyridoxine 5'-phosphate from D-erythrose 4-phosphate: step 4/5. In terms of biological role, catalyzes the NAD(P)-dependent oxidation of 4-(phosphooxy)-L-threonine (HTP) into 2-amino-3-oxo-4-(phosphooxy)butyric acid which spontaneously decarboxylates to form 3-amino-2-oxopropyl phosphate (AHAP). This Xanthomonas campestris pv. campestris (strain B100) protein is 4-hydroxythreonine-4-phosphate dehydrogenase.